The following is a 552-amino-acid chain: Chromosomal replication initiator protein DnaA (552 aa).

The tract at residues 1–90 is domain I, interacts with DnaA modulators; it reads MWNETWNEIT…FTVAVTVDPT (90 aa). The interval 90–210 is domain II; that stretch reads TLDVIQDLPH…KPAHDPDRNG (121 aa). The disordered stretch occupies residues 113-213; sequence EHPHYSPVSQ…HDPDRNGSLN (101 aa). The segment covering 155 to 170 has biased composition (low complexity); it reads PQPSQSSQSAQQQPAQ. Residues 211 to 427 form a domain III, AAA+ region region; sequence SLNPRYTFDT…GAFIRVSAYA (217 aa). The ATP site is built by Gly255, Gly257, Lys258, and Thr259. A domain IV, binds dsDNA region spans residues 428–552; it reads SLNEAPINMA…TQQIKSSDRA (125 aa).

Belongs to the DnaA family. In terms of assembly, oligomerizes as a right-handed, spiral filament on DNA at oriC.

The protein resides in the cytoplasm. Functionally, plays an essential role in the initiation and regulation of chromosomal replication. ATP-DnaA binds to the origin of replication (oriC) to initiate formation of the DNA replication initiation complex once per cell cycle. Binds the DnaA box (a 9 base pair repeat at the origin) and separates the double-stranded (ds)DNA. Forms a right-handed helical filament on oriC DNA; dsDNA binds to the exterior of the filament while single-stranded (ss)DNA is stabiized in the filament's interior. The ATP-DnaA-oriC complex binds and stabilizes one strand of the AT-rich DNA unwinding element (DUE), permitting loading of DNA polymerase. After initiation quickly degrades to an ADP-DnaA complex that is not apt for DNA replication. Binds acidic phospholipids. The sequence is that of Chromosomal replication initiator protein DnaA from Corynebacterium diphtheriae (strain ATCC 700971 / NCTC 13129 / Biotype gravis).